A 923-amino-acid chain; its full sequence is Periplasmic nitrate reductase (923 aa).

Positions 1-30 (MNRRDFIKNTAIASAASVAGLSVPSSMLGA) form a signal peptide, tat-type signal. In terms of domain architecture, 4Fe-4S Mo/W bis-MGD-type spans 34-90 (WKWDKAVCRFCGTGCGIMIARKDGKIVATKGDPAAPVNRGLNCIKGYFNAKIMYGED). [4Fe-4S] cluster is bound by residues cysteine 41, cysteine 44, cysteine 48, and cysteine 76. Mo-bis(molybdopterin guanine dinucleotide) is bound by residues lysine 78, glutamine 146, asparagine 171, cysteine 175, 208-215 (WGANMAEM), methionine 416, glutamine 420, asparagine 526, 551-552 (SD), lysine 574, aspartate 601, and 813-822 (TGRVLEHWHS). Tryptophan 889 serves as a coordination point for substrate. The Mo-bis(molybdopterin guanine dinucleotide) site is built by asparagine 897 and lysine 914.

This sequence belongs to the prokaryotic molybdopterin-containing oxidoreductase family. NasA/NapA/NarB subfamily. As to quaternary structure, component of the periplasmic nitrate reductase NapAB complex composed of NapA and NapB. [4Fe-4S] cluster serves as cofactor. Requires Mo-bis(molybdopterin guanine dinucleotide) as cofactor. Predicted to be exported by the Tat system. The position of the signal peptide cleavage has not been experimentally proven.

Its subcellular location is the periplasm. It catalyses the reaction 2 Fe(II)-[cytochrome] + nitrate + 2 H(+) = 2 Fe(III)-[cytochrome] + nitrite + H2O. Catalytic subunit of the periplasmic nitrate reductase complex NapAB. Receives electrons from NapB and catalyzes the reduction of nitrate to nitrite. The chain is Periplasmic nitrate reductase from Campylobacter jejuni subsp. jejuni serotype O:23/36 (strain 81-176).